The following is a 617-amino-acid chain: Elongation factor 4 (617 aa).

The tr-type G domain occupies 17–203 (ERIRNFCIIA…RVCELVPHPV (187 aa)). Residues 29–34 (DHGKST) and 150–153 (NKID) each bind GTP.

This sequence belongs to the TRAFAC class translation factor GTPase superfamily. Classic translation factor GTPase family. LepA subfamily.

It localises to the cell membrane. It carries out the reaction GTP + H2O = GDP + phosphate + H(+). Its function is as follows. Required for accurate and efficient protein synthesis under certain stress conditions. May act as a fidelity factor of the translation reaction, by catalyzing a one-codon backward translocation of tRNAs on improperly translocated ribosomes. Back-translocation proceeds from a post-translocation (POST) complex to a pre-translocation (PRE) complex, thus giving elongation factor G a second chance to translocate the tRNAs correctly. Binds to ribosomes in a GTP-dependent manner. This chain is Elongation factor 4, found in Corynebacterium urealyticum (strain ATCC 43042 / DSM 7109).